The following is a 434-amino-acid chain: Asparagine--tRNA ligase (434 aa).

Belongs to the class-II aminoacyl-tRNA synthetase family.

Its subcellular location is the cytoplasm. It carries out the reaction tRNA(Asn) + L-asparagine + ATP = L-asparaginyl-tRNA(Asn) + AMP + diphosphate + H(+). The sequence is that of Asparagine--tRNA ligase from Pyrococcus abyssi (strain GE5 / Orsay).